An 84-amino-acid polypeptide reads, in one-letter code: Exodeoxyribonuclease 7 small subunit (84 aa).

Belongs to the XseB family. In terms of assembly, heterooligomer composed of large and small subunits.

Its subcellular location is the cytoplasm. It carries out the reaction Exonucleolytic cleavage in either 5'- to 3'- or 3'- to 5'-direction to yield nucleoside 5'-phosphates.. In terms of biological role, bidirectionally degrades single-stranded DNA into large acid-insoluble oligonucleotides, which are then degraded further into small acid-soluble oligonucleotides. The sequence is that of Exodeoxyribonuclease 7 small subunit from Yersinia enterocolitica serotype O:8 / biotype 1B (strain NCTC 13174 / 8081).